We begin with the raw amino-acid sequence, 94 residues long: ATP synthase subunit c (94 aa).

The next 2 membrane-spanning stretches (helical) occupy residues 15–35 and 58–78; these read IGVG…WGLI and FIFA…AMWF.

This sequence belongs to the ATPase C chain family. As to quaternary structure, F-type ATPases have 2 components, F(1) - the catalytic core - and F(0) - the membrane proton channel. F(1) has five subunits: alpha(3), beta(3), gamma(1), delta(1), epsilon(1). F(0) has three main subunits: a(1), b(2) and c(10-14). The alpha and beta chains form an alternating ring which encloses part of the gamma chain. F(1) is attached to F(0) by a central stalk formed by the gamma and epsilon chains, while a peripheral stalk is formed by the delta and b chains.

Its subcellular location is the cell inner membrane. In terms of biological role, f(1)F(0) ATP synthase produces ATP from ADP in the presence of a proton or sodium gradient. F-type ATPases consist of two structural domains, F(1) containing the extramembraneous catalytic core and F(0) containing the membrane proton channel, linked together by a central stalk and a peripheral stalk. During catalysis, ATP synthesis in the catalytic domain of F(1) is coupled via a rotary mechanism of the central stalk subunits to proton translocation. Its function is as follows. Key component of the F(0) channel; it plays a direct role in translocation across the membrane. A homomeric c-ring of between 10-14 subunits forms the central stalk rotor element with the F(1) delta and epsilon subunits. This Hydrogenovibrio crunogenus (strain DSM 25203 / XCL-2) (Thiomicrospira crunogena) protein is ATP synthase subunit c.